The sequence spans 1165 residues: Adhesion G-protein coupled receptor G6 (1165 aa).

Positions 1–30 (MMFDTLGKRCCPWRLKPSALLFLFVLCVTC) are cleaved as a signal peptide. At 31–832 (VPLSVCGCGS…ASQIDGRNTK (802 aa)) the chain is on the extracellular side. Cys41 and Cys67 are joined by a disulfide. In terms of domain architecture, CUB spans 41–149 (CRLVLSNPSG…KGFNASYIRV (109 aa)). 2 residues coordinate Ca(2+): Glu89 and Asp97. Cys94 and Cys111 form a disulfide bridge. Residue Asn121 is glycosylated (N-linked (GlcNAc...) asparagine). Positions 134, 136, and 137 each coordinate Ca(2+). N-linked (GlcNAc...) asparagine glycosylation is present at Asn143. A Pentraxin (PTX) domain is found at 154–356 (RNQKVILPQT…ALKAEGNLSC (203 aa)). 2 cysteine pairs are disulfide-bonded: Cys186/Cys254 and Cys231/Cys277. N-linked (GlcNAc...) asparagine glycans are attached at residues Asn258, Asn314, Asn324, Asn353, Asn370, Asn410, Asn417, Asn424, Asn458, Asn462, and Asn478. The segment at 446-807 (DKRLVLWALL…LDAGETICLC (362 aa)) is mediates interaction with laminin-2. Disulfide bonds link Cys498-Cys533 and Cys521-Cys550. N-linked (GlcNAc...) asparagine glycosylation is found at Asn536, Asn549, Asn563, Asn570, Asn665, Asn674, Asn720, Asn746, Asn781, and Asn788. Residues 640–823 (PHVNIETQNL…GVLMDLPRSA (184 aa)) form the GAIN-B domain. Intrachain disulfides connect Cys773-Cys805 and Cys792-Cys807. The GPS stretch occupies residues 773 to 823 (CAFWDMNKNKSFGGWNTSGCVAHSDLDAGETICLCSHFTHFGVLMDLPRSA). Residues 812-820 (HFGVLMDLP) are stachel. The helical transmembrane segment at 833 to 853 (VLTFITYIGCGISAIFSAATL) threads the bilayer. The Cytoplasmic portion of the chain corresponds to 854-873 (LTYVAFEKLRRDYPSKILMN). A helical transmembrane segment spans residues 874 to 894 (LSSALLFLNLIFLLDGWVTSF). Over 895-899 (GVAGL) the chain is Extracellular. The chain crosses the membrane as a helical span at residues 900 to 920 (CTAVAALLHFFLLATFTWMGL). Residues 921–940 (EAIHMYIALVKVFNTYIHRY) lie on the Cytoplasmic side of the membrane. The helical transmembrane segment at 941 to 961 (ILKFCIIGWGLPALVVSIILV) threads the bilayer. Residues 962-994 (SRRQNEVYGKESYGKDQDDEFCWIQDPVVFYVS) lie on the Extracellular side of the membrane. The helical transmembrane segment at 995–1015 (CAGYFGVMFFLNVAMFIVVMV) threads the bilayer. Residues 1016–1039 (QICGRNGKRSNRTLREEVLRNLRS) lie on the Cytoplasmic side of the membrane. The chain crosses the membrane as a helical span at residues 1040–1060 (VVSLTFLLGMTWGFAFFAWGP). At 1061–1062 (LN) the chain is on the extracellular side. The helical transmembrane segment at 1063-1083 (IPFMYLFSIFNSLQGLFIFIF) threads the bilayer. Asn1073 serves as a coordination point for 17alpha-hydroxyprogesterone. Over 1084–1165 (HCAMKENVQK…KRNSHSDNFS (82 aa)) the chain is Cytoplasmic. Low complexity predominate over residues 1126–1154 (NLGKSLSSSSIGSNSTYLTSKSKSSSTTY). The tract at residues 1126–1165 (NLGKSLSSSSIGSNSTYLTSKSKSSSTTYFKRNSHSDNFS) is disordered. Phosphoserine occurs at positions 1135 and 1138.

This sequence belongs to the G-protein coupled receptor 2 family. Adhesion G-protein coupled receptor (ADGR) subfamily. Heterodimer of 2 chains generated by proteolytic processing; the large extracellular N-terminal fragment and the membrane-bound C-terminal fragment predominantly remain associated and non-covalently linked. Interacts with Laminin-2; this interaction stabilizes the receptor in an inactive state. Laminin-2 polymerization could facilitate ADGRG6-NTF removal, thereby exposing the tethered agonist to drive myelination. Interacts with PRNP. Interacts with ITGB1. Interacts with LRP1. Post-translationally, proteolytically cleaved into 2 conserved sites: one in the GPS region of the GAIN-B domain (S1 site) and the other in the middle of the extracellular domain (S2 site). The proteolytic cleavage at S1 site generates an extracellular subunit and a seven-transmembrane subunit. Furin is involved in the cleavage of the S2 site generating a soluble fragment. Processing at the GPS region occurred independent of and probably prior to the cleavage at the S2 site. Proteolytic cleavage is required for activation of the receptor. Expressed at high levels in the heart, somite and otic vesicle during embryogenesis and in adult lung.

The protein localises to the cell membrane. Its activity is regulated as follows. Forms a heterodimer of 2 chains generated by proteolytic processing that remain associated through non-covalent interactions mediated by the GAIN-B domain. In the inactivated receptor, the Stachel sequence (also named stalk) is embedded in the GAIN-B domain, where it adopts a beta-strand conformation. On activation, the Stachel moves into the 7 transmembrane region and adopts a twisted hook-shaped configuration that forms contacts within the receptor, leading to coupling of a G-alpha protein, which activates signaling. The cleaved GAIN-B and N-terminal domains can then dissociate from the rest of the receptor. Adhesion G-protein coupled receptor (aGPCR) for steroid hormones, such as progesterone and 17alpha-hydroxyprogesterone (17OHP). Involved in many biological processes, such as myelination, sprouting angiogenesis, placenta, ear and cartilage development. Ligand binding causes a conformation change that triggers signaling via guanine nucleotide-binding proteins (G proteins) and modulates the activity of downstream effectors, such as adenylate cyclase. ADGRG6 is coupled to G(i) G alpha proteins and mediates inhibition of adenylate cyclase. Also able to couple to G(q) G proteins. Involved in myelination of the peripheral nervous system: required for differentiation of promyelinating Schwann cells and for normal myelination of axons. Also acts as a regulator of body length and bone mass. Acts as a regulator of blood-brain barrier formation in the central nervous system vie its association with LRP1 and ITGB1. This chain is Adhesion G-protein coupled receptor G6, found in Mus musculus (Mouse).